The sequence spans 286 residues: Forkhead box protein E3 (286 aa).

Positions 1–62 are disordered; sequence MDAHVAFSGF…GRRRRRPLQR (62 aa). Residues 64–158 constitute a DNA-binding region (fork-head); the sequence is KPPYSYIALI…DNGSFLRRRK (95 aa).

The protein localises to the nucleus. Functionally, transcription factor that controls lens epithelial cell growth through regulation of proliferation, apoptosis and cell cycle. During lens development, controls the ratio of the lens fiber cells to the cells of the anterior lens epithelium by regulating the rate of proliferation and differentiation. Controls lens vesicle closure and subsequent separation of the lens vesicle from ectoderm. Controls the expression of DNAJB1 in a pathway that is crucial for the development of the anterior segment of the eye. The sequence is that of Forkhead box protein E3 (Foxe3) from Rattus norvegicus (Rat).